Consider the following 310-residue polypeptide: Thiamine-monophosphate kinase (310 aa).

Mg(2+) contacts are provided by Asp24, Thr38, and Asp39. Residue Asp46 participates in substrate binding. The Mg(2+) site is built by Asp67 and Asp115. Residues 114–115 (GD) and Arg138 each bind ATP. Residue Asp203 coordinates Mg(2+). Ser205 is an ATP binding site. Asp206 is a Mg(2+) binding site. Residues Glu251 and Trp306 each contribute to the substrate site.

It belongs to the thiamine-monophosphate kinase family.

The catalysed reaction is thiamine phosphate + ATP = thiamine diphosphate + ADP. It functions in the pathway cofactor biosynthesis; thiamine diphosphate biosynthesis; thiamine diphosphate from thiamine phosphate: step 1/1. Its function is as follows. Catalyzes the ATP-dependent phosphorylation of thiamine-monophosphate (TMP) to form thiamine-pyrophosphate (TPP), the active form of vitamin B1. The chain is Thiamine-monophosphate kinase from Nitrosopumilus maritimus (strain SCM1).